The chain runs to 135 residues: UPF0355 protein MRSA252 (135 aa).

This sequence belongs to the UPF0355 family.

The chain is UPF0355 protein MRSA252 from Staphylococcus aureus (strain MRSA252).